A 486-amino-acid chain; its full sequence is Maternal protein exuperantia (486 aa).

Disordered regions lie at residues 202-233 and 386-477; these read NARV…RDEF and STIR…ISLP. Basic and acidic residues predominate over residues 218 to 233; sequence ADKHVKNGLQKERDEF. Positions 387 to 397 are enriched in basic residues; the sequence is TIRRRNKRNTP. 2 stretches are compositionally biased toward polar residues: residues 420–437 and 464–476; these read KSQS…TPSP and SALN…SISL.

In terms of biological role, ensures the proper localization of the mRNA of the bicoid gene to the anterior regions of the oocyte thus playing a fundamental role in the establishment of the polarity of the oocyte. May bind the bcd mRNA. This chain is Maternal protein exuperantia (exu), found in Drosophila virilis (Fruit fly).